Here is a 398-residue protein sequence, read N- to C-terminus: Acetate kinase (398 aa).

Mg(2+) is bound at residue asparagine 10. Residue lysine 17 participates in ATP binding. Arginine 91 contacts substrate. Aspartate 148 serves as the catalytic Proton donor/acceptor. ATP is bound by residues 208-212 (HLGNG), 283-285 (DCR), and 331-335 (GIGEN). Glutamate 385 contacts Mg(2+).

This sequence belongs to the acetokinase family. Homodimer. Mg(2+) is required as a cofactor. Requires Mn(2+) as cofactor.

Its subcellular location is the cytoplasm. The catalysed reaction is acetate + ATP = acetyl phosphate + ADP. Its pathway is metabolic intermediate biosynthesis; acetyl-CoA biosynthesis; acetyl-CoA from acetate: step 1/2. Functionally, catalyzes the formation of acetyl phosphate from acetate and ATP. Can also catalyze the reverse reaction. The chain is Acetate kinase from Shewanella woodyi (strain ATCC 51908 / MS32).